The chain runs to 266 residues: Succinate dehydrogenase [ubiquinone] iron-sulfur subunit, mitochondrial (266 aa).

The N-terminal 20 residues, M1–A20, are a transit peptide targeting the mitochondrion. The 2Fe-2S ferredoxin-type domain occupies F36–M127. C87, C92, C95, and C107 together coordinate [2Fe-2S] cluster. The 4Fe-4S ferredoxin-type domain occupies D169 to Y199. [4Fe-4S] cluster-binding residues include C179, C182, and C185. C189 is a [3Fe-4S] cluster binding site. Residue W194 coordinates a ubiquinone. Residues C236 and C242 each contribute to the [3Fe-4S] cluster site. [4Fe-4S] cluster is bound at residue C246.

Belongs to the succinate dehydrogenase/fumarate reductase iron-sulfur protein family. As to quaternary structure, component of complex II composed of four subunits: a flavoprotein (FP), an iron-sulfur protein (IP), and a cytochrome b composed of a large and a small subunit. Requires [2Fe-2S] cluster as cofactor. It depends on [3Fe-4S] cluster as a cofactor. [4Fe-4S] cluster serves as cofactor.

The protein localises to the mitochondrion inner membrane. The catalysed reaction is a quinone + succinate = fumarate + a quinol. It participates in carbohydrate metabolism; tricarboxylic acid cycle; fumarate from succinate (eukaryal route): step 1/1. Functionally, subunit of succinate dehydrogenase (SDH) that is involved in complex II of the mitochondrial electron transport chain and is responsible for transferring electrons from succinate to ubiquinone (coenzyme Q). SDH1 and SDH2 form the catalytic dimer. Electrons flow from succinate to the FAD bound to SDH1, and sequentially through the iron-sulfur clusters bound to SDH2 and enter the membrane dimer formed by SDH3 and SDH4. The polypeptide is Succinate dehydrogenase [ubiquinone] iron-sulfur subunit, mitochondrial (SDH2) (Saccharomyces cerevisiae (strain ATCC 204508 / S288c) (Baker's yeast)).